The sequence spans 147 residues: UPF0735 ACT domain-containing protein BH1214 (147 aa).

Residues 70 to 145 (TLSINLEDRS…AVEKVELVGS (76 aa)) form the ACT domain.

This sequence belongs to the UPF0735 family.

This chain is UPF0735 ACT domain-containing protein BH1214, found in Halalkalibacterium halodurans (strain ATCC BAA-125 / DSM 18197 / FERM 7344 / JCM 9153 / C-125) (Bacillus halodurans).